The primary structure comprises 313 residues: PDZ domain-containing protein GIPC2 (313 aa).

The segment covering 14–27 (KETSRLVEGEHTDA) has biased composition (basic and acidic residues). Residues 14–34 (KETSRLVEGEHTDAAVRSLPS) are disordered. Residues 117–197 (EVNVYKSEDS…EELFTLTLIE (81 aa)) form the PDZ domain.

This sequence belongs to the GIPC family. As to quaternary structure, probably interacts with SEMA5A.

The protein localises to the cytoplasm. In Bos taurus (Bovine), this protein is PDZ domain-containing protein GIPC2 (GIPC2).